Consider the following 337-residue polypeptide: Quinolinate synthase (337 aa).

Histidine 40 and serine 57 together coordinate iminosuccinate. [4Fe-4S] cluster is bound at residue cysteine 102. Iminosuccinate is bound by residues 128-130 (YVN) and serine 145. Position 189 (cysteine 189) interacts with [4Fe-4S] cluster. Residues 215–217 (HPE) and threonine 243 contribute to the iminosuccinate site. [4Fe-4S] cluster is bound at residue cysteine 288.

This sequence belongs to the quinolinate synthase family. Type 2 subfamily. [4Fe-4S] cluster serves as cofactor.

Its subcellular location is the cytoplasm. It catalyses the reaction iminosuccinate + dihydroxyacetone phosphate = quinolinate + phosphate + 2 H2O + H(+). Its pathway is cofactor biosynthesis; NAD(+) biosynthesis; quinolinate from iminoaspartate: step 1/1. Its function is as follows. Catalyzes the condensation of iminoaspartate with dihydroxyacetone phosphate to form quinolinate. The sequence is that of Quinolinate synthase from Mycobacterium sp. (strain JLS).